The primary structure comprises 539 residues: Phosphoenolpyruvate carboxykinase (ATP) (539 aa).

Residues Arg-64, Tyr-206, and Lys-212 each coordinate substrate. Residues Lys-212, His-231, and 247–255 (GLSGTGKTT) each bind ATP. Residues Lys-212 and His-231 each coordinate Mn(2+). A Mn(2+)-binding site is contributed by Asp-268. ATP contacts are provided by residues Glu-296, Arg-332, 448–449 (RI), and Thr-454. Arg-332 contributes to the substrate binding site.

It belongs to the phosphoenolpyruvate carboxykinase (ATP) family. In terms of assembly, monomer. It depends on Mn(2+) as a cofactor.

The protein resides in the cytoplasm. The catalysed reaction is oxaloacetate + ATP = phosphoenolpyruvate + ADP + CO2. It participates in carbohydrate biosynthesis; gluconeogenesis. In terms of biological role, involved in the gluconeogenesis. Catalyzes the conversion of oxaloacetate (OAA) to phosphoenolpyruvate (PEP) through direct phosphoryl transfer between the nucleoside triphosphate and OAA. The protein is Phosphoenolpyruvate carboxykinase (ATP) of Yersinia enterocolitica serotype O:8 / biotype 1B (strain NCTC 13174 / 8081).